We begin with the raw amino-acid sequence, 776 residues long: LPS-assembly protein LptD (776 aa).

The first 24 residues, Met1–Ala24, serve as a signal peptide directing secretion.

Belongs to the LptD family. In terms of assembly, component of the lipopolysaccharide transport and assembly complex. Interacts with LptE and LptA.

It is found in the cell outer membrane. Its function is as follows. Together with LptE, is involved in the assembly of lipopolysaccharide (LPS) at the surface of the outer membrane. The polypeptide is LPS-assembly protein LptD (Vibrio vulnificus (strain CMCP6)).